A 456-amino-acid chain; its full sequence is Enolase (456 aa).

(2R)-2-phosphoglycerate is bound at residue glutamine 177. The active-site Proton donor is glutamate 219. The Mg(2+) site is built by aspartate 256, glutamate 310, and aspartate 337. The (2R)-2-phosphoglycerate site is built by lysine 362, arginine 391, serine 392, and lysine 413. Lysine 362 (proton acceptor) is an active-site residue.

It belongs to the enolase family. As to quaternary structure, homodimer. It depends on Mg(2+) as a cofactor.

The protein resides in the cytoplasm. Its subcellular location is the secreted. It localises to the cell surface. The catalysed reaction is (2R)-2-phosphoglycerate = phosphoenolpyruvate + H2O. It participates in carbohydrate degradation; glycolysis; pyruvate from D-glyceraldehyde 3-phosphate: step 4/5. Catalyzes the reversible conversion of 2-phosphoglycerate (2-PG) into phosphoenolpyruvate (PEP). It is essential for the degradation of carbohydrates via glycolysis. Its function is as follows. 'Moonlights' as a plasminogen receptor. Binds plasminogen, but no fibronectin binding was observed. Plasminogen binding increases bacterial adherence to host cells; plasmin activity leads to degradation of host extracellular matrix proteins, facilitating bacterial dissemination and disease spread. This chain is Enolase, found in Mycoplasma pneumoniae (strain ATCC 29342 / M129 / Subtype 1) (Mycoplasmoides pneumoniae).